Here is a 517-residue protein sequence, read N- to C-terminus: Acetyl-coenzyme A carboxylase carboxyl transferase subunit beta, chloroplastic (517 aa).

Basic and acidic residues-rich tracts occupy residues 1–17 (MKPT…KSNE), 24–41 (GDNK…KSNE), 48–65 (GDNK…KSNE), and 72–81 (GDKQKDKKDG). Disordered regions lie at residues 1 to 179 (MKPT…KEEE) and 204 to 234 (KHRD…DSEA). A compositionally biased stretch (acidic residues) spans 87-131 (YDDEYEEDLEYDDEYEEDLEYDDEYEEDLEYDDEEYDDEYEEDLE). 2 stretches are compositionally biased toward basic and acidic residues: residues 132-179 (GDNK…KEEE) and 209-229 (KSVP…RDTD). The 272-residue stretch at 243–514 (LWVHCKLCSG…NSQVINIYNY (272 aa)) folds into the CoA carboxyltransferase N-terminal domain. 4 residues coordinate Zn(2+): cysteine 247, cysteine 250, cysteine 266, and cysteine 269. Residues 247–269 (CKLCSGFNYKKILKSKNNVCEQC) form a C4-type zinc finger.

Belongs to the AccD/PCCB family. Acetyl-CoA carboxylase is a heterohexamer composed of biotin carboxyl carrier protein, biotin carboxylase and 2 subunits each of ACCase subunit alpha and ACCase plastid-coded subunit beta (accD). It depends on Zn(2+) as a cofactor.

Its subcellular location is the plastid. It is found in the chloroplast stroma. It catalyses the reaction N(6)-carboxybiotinyl-L-lysyl-[protein] + acetyl-CoA = N(6)-biotinyl-L-lysyl-[protein] + malonyl-CoA. It functions in the pathway lipid metabolism; malonyl-CoA biosynthesis; malonyl-CoA from acetyl-CoA: step 1/1. Functionally, component of the acetyl coenzyme A carboxylase (ACC) complex. Biotin carboxylase (BC) catalyzes the carboxylation of biotin on its carrier protein (BCCP) and then the CO(2) group is transferred by the transcarboxylase to acetyl-CoA to form malonyl-CoA. This Oenothera elata subsp. hookeri (Hooker's evening primrose) protein is Acetyl-coenzyme A carboxylase carboxyl transferase subunit beta, chloroplastic.